The following is an 845-amino-acid chain: Ribonucleoside-diphosphate reductase subunit alpha (845 aa).

Positions 1-98 (MHIIKRNGEP…LYRDDRTKKR (98 aa)) constitute an ATP-cone domain. Substrate-binding positions include Thr303, 318 to 319 (SC), Gly347, 534 to 538 (NLCTE), and 725 to 729 (PTSST). The cysteines at positions 319 and 574 are disulfide-linked. Asn534 functions as the Proton acceptor in the catalytic mechanism. Residue Cys536 is the Cysteine radical intermediate of the active site. Residue Glu538 is the Proton acceptor of the active site.

Belongs to the ribonucleoside diphosphate reductase large chain family. Tetramer of two alpha and two beta subunits.

It carries out the reaction a 2'-deoxyribonucleoside 5'-diphosphate + [thioredoxin]-disulfide + H2O = a ribonucleoside 5'-diphosphate + [thioredoxin]-dithiol. Under complex allosteric control mediated by deoxynucleoside triphosphates and ATP binding. The type of nucleotide bound at the specificity site determines substrate preference. It seems probable that ATP makes the enzyme reduce CDP and UDP, dGTP favors ADP reduction and dTTP favors GDP reduction. Provides the precursors necessary for DNA synthesis. Catalyzes the biosynthesis of deoxyribonucleotides from the corresponding ribonucleotides. In Treponema pallidum (strain Nichols), this protein is Ribonucleoside-diphosphate reductase subunit alpha (nrdA).